The chain runs to 212 residues: Hevein-like preproprotein (212 aa).

The first 21 residues, 1-21 (MKIRLSITIILLSYTVATVAG), serve as a signal peptide directing secretion. In terms of domain architecture, Chitin-binding type-1 spans 22 to 64 (QQCGRQGGGRTCPGNICCSQYGYCGTTADYCSPTNNCQSNCWG). Cystine bridges form between C24–C39, C33–C45, C38–C52, C58–C62, C100–C132, C121–C155, and C135–C191. A Barwin domain is found at 72–193 (ESASNVRATY…VDYQFVDCGN (122 aa)).

As to quaternary structure, CB-HEL interacts strongly with a fungal fruiting body lectin.

The protein localises to the vacuole. Functionally, fungal growth inhibitors. Neither CB-HEL nor CD-HEL have chitinase activity, but both have antimicrobial activities. CD-HEL has RNase, but no DNase activity. This Arabidopsis thaliana (Mouse-ear cress) protein is Hevein-like preproprotein (HEL).